A 771-amino-acid chain; its full sequence is DnaJ homolog subfamily C member 16 (771 aa).

Positions 1-25 (MELKRLSISWQFLIVLVLILQSLSA) are cleaved as a signal peptide. Residues 26–532 (LDFDPYRVLG…ESLLHSNWRE (507 aa)) lie on the Cytoplasmic side of the membrane. In terms of domain architecture, J spans 29 to 93 (DPYRVLGVSR…EKRTNYDHYG (65 aa)). A Thioredoxin domain is found at 116-244 (FYFDESFFHF…LRQFVESLLP (129 aa)). Residues 533–553 (MMPLLSLIFSALFILFGTVIV) traverse the membrane as a helical; Anchor for type IV membrane protein segment. At 554-771 (QAFSDSNEER…FYIPSWPELD (218 aa)) the chain is on the extracellular side. Residues 559–590 (SNEERESHPPDKEEVPEKAGKTEPSFTKESSS) are disordered. Positions 560 to 579 (NEERESHPPDKEEVPEKAGK) are enriched in basic and acidic residues. Asn-628 carries N-linked (GlcNAc...) asparagine glycosylation.

Its subcellular location is the endoplasmic reticulum membrane. Its function is as follows. Plays an important role in regulating the size of autophagosomes during the formation process. This is DnaJ homolog subfamily C member 16 (Dnajc16) from Rattus norvegicus (Rat).